We begin with the raw amino-acid sequence, 306 residues long: N-acetylmuramic acid 6-phosphate etherase (306 aa).

An SIS domain is found at 60-223; the sequence is TAAALRGGGR…STGAMVRLGK (164 aa). The active-site Proton donor is glutamate 88. Glutamate 119 is a catalytic residue.

The protein belongs to the GCKR-like family. MurNAc-6-P etherase subfamily. In terms of assembly, homodimer.

It carries out the reaction N-acetyl-D-muramate 6-phosphate + H2O = N-acetyl-D-glucosamine 6-phosphate + (R)-lactate. The protein operates within amino-sugar metabolism; N-acetylmuramate degradation. Specifically catalyzes the cleavage of the D-lactyl ether substituent of MurNAc 6-phosphate, producing GlcNAc 6-phosphate and D-lactate. The protein is N-acetylmuramic acid 6-phosphate etherase of Gloeobacter violaceus (strain ATCC 29082 / PCC 7421).